The chain runs to 1319 residues: Protein Jumonji (1319 aa).

Basic residues predominate over residues 1 to 11; that stretch reads MSKERPKRNII. Disordered stretches follow at residues 1-23, 50-130, 173-265, 351-382, 396-478, 499-537, and 549-599; these read MSKE…GMPW, DGID…PSLP, DEED…NTNG, YSNN…QSIN, HKMT…KALN, PIQK…PKRA, and QQRA…RSRA. Polar residues predominate over residues 61–70; the sequence is ASLSNGQLNG. A compositionally biased stretch (basic and acidic residues) spans 74–88; sequence GHKEDGSRSQRKDGG. The Nuclear localization signal signature appears at 96–102; it reads PAKKRPR. The span at 98 to 107 shows a compositional bias: basic residues; that stretch reads KKRPRLHAQR. Polar residues predominate over residues 109-121; it reads FAQSQPNSPSNTP. Residues 173–185 show a composition bias toward acidic residues; it reads DEEDLEDEDEIEE. A compositionally biased stretch (polar residues) spans 191 to 200; the sequence is VASTSCQSTP. The span at 221 to 251 shows a compositional bias: basic and acidic residues; sequence KDKELTPRSKARESSVGRDRSERCDESEISH. Residues 372–382 are compositionally biased toward polar residues; the sequence is LSHSGKAQSIN. A compositionally biased stretch (basic and acidic residues) spans 413–424; that stretch reads SAREEEVVDRPV. Over residues 505–515 the composition is skewed to pro residues; the sequence is PAPPPSPPAAP. Composition is skewed to low complexity over residues 516–525 and 554–570; these read ASPSMPQNPA and TNPT…ASKS. The span at 583–598 shows a compositional bias: basic and acidic residues; sequence RLDRDRERERERERSR. Positions 607–648 constitute a JmjN domain; sequence VPIFKPSSREFQDPLVYLDSFREQVESCGLCRVLPPTDWRPE. The ARID domain maps to 671-779; the sequence is WGPNVQKLAC…FLLSYDLLSP (109 aa). Over residues 798–811 the composition is skewed to basic and acidic residues; it reads RKRGPLEGHSDNGH. The segment at 798-818 is disordered; it reads RKRGPLEGHSDNGHHSLALPR. The short motif at 944–948 is the GSGFP motif element; it reads GSGFP. In terms of domain architecture, JmjC spans 954–1118; it reads PFSKHGWNLT…LGYEAAKDLK (165 aa).

The protein belongs to the JARID2 family. As to quaternary structure, associates with the PRC2 complex.

Its subcellular location is the nucleus. Its function is as follows. Regulator of histone methyltransferase complexes that plays an essential role in embryonic development. Acts by modulating histone methyltransferase activity and promoting the recruitment of histone methyltransferase complexes to their target genes. Binds DNA and mediates the recruitment of the PRC2 complex to target genes in embryonic stem cells. Does not have histone demethylase activity but regulates activity of various histone methyltransferase complexes. In embryonic stem cells, it associates with the PRC2 complex and inhibits trimethylation of 'Lys-27' of histone H3 (H3K27me3) by the PRC2 complex, thereby playing a key role in differentiation of embryonic stem cells and normal development. This Danio rerio (Zebrafish) protein is Protein Jumonji (jarid2b).